The primary structure comprises 316 residues: Probable peptidyl-tRNA hydrolase 2 (316 aa).

The segment at 1 to 127 (MSENIPDIDP…SHPVDPQEPN (127 aa)) is disordered. A compositionally biased stretch (polar residues) spans 44-53 (PTPSSVTVDN). The span at 75–89 (IPEVPIPSSAISISS) shows a compositional bias: low complexity. One can recognise a UBA domain in the interval 128-169 (EVNNEYLAHLLDLGFDEYTAVLALKRTNSAGVEQAVAWIVER). The tract at residues 170–193 (SNESDFDEDSSSSENEADEEMGAV) is disordered. A compositionally biased stretch (acidic residues) spans 173–190 (SDFDEDSSSSENEADEEM).

The protein belongs to the PTH2 family.

The enzyme catalyses an N-acyl-L-alpha-aminoacyl-tRNA + H2O = an N-acyl-L-amino acid + a tRNA + H(+). The natural substrate for this enzyme may be peptidyl-tRNAs which drop off the ribosome during protein synthesis. The chain is Probable peptidyl-tRNA hydrolase 2 from Caenorhabditis elegans.